Reading from the N-terminus, the 199-residue chain is dITP/XTP pyrophosphatase (199 aa).

Residue 7 to 12 (TTNLHK) coordinates substrate. Mg(2+) contacts are provided by E41 and D70. D70 functions as the Proton acceptor in the catalytic mechanism. Substrate is bound by residues S71, 154–157 (FGYD), K177, and 182–183 (HR).

Belongs to the HAM1 NTPase family. As to quaternary structure, homodimer. Mg(2+) is required as a cofactor.

It catalyses the reaction XTP + H2O = XMP + diphosphate + H(+). The enzyme catalyses dITP + H2O = dIMP + diphosphate + H(+). The catalysed reaction is ITP + H2O = IMP + diphosphate + H(+). Pyrophosphatase that catalyzes the hydrolysis of nucleoside triphosphates to their monophosphate derivatives, with a high preference for the non-canonical purine nucleotides XTP (xanthosine triphosphate), dITP (deoxyinosine triphosphate) and ITP. Seems to function as a house-cleaning enzyme that removes non-canonical purine nucleotides from the nucleotide pool, thus preventing their incorporation into DNA/RNA and avoiding chromosomal lesions. This Protochlamydia amoebophila (strain UWE25) protein is dITP/XTP pyrophosphatase.